The sequence spans 356 residues: Vesicular integral-membrane protein VIP36 (356 aa).

The first 44 residues, 1-44, serve as a signal peptide directing secretion; that stretch reads MAAEGWIWRWGWGRRCLGRPGLLGPGPGPTTPLFLLLLLGSVTA. Residues 45–322 are Lumenal-facing; the sequence is DITDGNSEHL…FRSGPLTGWR (278 aa). The L-type lectin-like domain occupies 52–276; the sequence is EHLKREHSLI…DIISMKLFQL (225 aa). A carbohydrate contacts are provided by S96 and D131. D162, Y164, and N166 together coordinate Ca(2+). 164-166 contributes to the a carbohydrate binding site; it reads YPN. The N-linked (GlcNAc...) asparagine glycan is linked to N183. Position 190 (H190) interacts with a carbohydrate. Ca(2+) is bound at residue D193. An intrachain disulfide couples C202 to C239. 260-262 contacts a carbohydrate; the sequence is GDL. The helical transmembrane segment at 323–345 threads the bilayer; the sequence is VFLLLLCALLGIVVCAVVGAVVF. The Cytoplasmic segment spans residues 346-356; the sequence is QKRQERNKRFY.

Ca(2+) is required as a cofactor. Ubiquitous.

The protein localises to the endoplasmic reticulum-Golgi intermediate compartment membrane. It is found in the golgi apparatus membrane. Its subcellular location is the endoplasmic reticulum membrane. Plays a role as an intracellular lectin in the early secretory pathway. Interacts with N-acetyl-D-galactosamine and high-mannose type glycans and may also bind to O-linked glycans. Involved in the transport and sorting of glycoproteins carrying high mannose-type glycans. The protein is Vesicular integral-membrane protein VIP36 (LMAN2) of Homo sapiens (Human).